A 152-amino-acid chain; its full sequence is Ribosome maturation factor RimP (152 aa).

This sequence belongs to the RimP family.

The protein resides in the cytoplasm. Its function is as follows. Required for maturation of 30S ribosomal subunits. This Paraburkholderia xenovorans (strain LB400) protein is Ribosome maturation factor RimP.